A 156-amino-acid polypeptide reads, in one-letter code: Small ribosomal subunit protein uS7 (156 aa).

It belongs to the universal ribosomal protein uS7 family. As to quaternary structure, part of the 30S ribosomal subunit. Contacts proteins S9 and S11.

In terms of biological role, one of the primary rRNA binding proteins, it binds directly to 16S rRNA where it nucleates assembly of the head domain of the 30S subunit. Is located at the subunit interface close to the decoding center, probably blocks exit of the E-site tRNA. The polypeptide is Small ribosomal subunit protein uS7 (Pelagibacter ubique (strain HTCC1062)).